The sequence spans 29 residues: Acidic phospholipase A2 Omo-E6 (29 aa).

The Ca(2+) site is built by Tyr27 and Gly29.

The cofactor is Ca(2+). Expressed by the venom gland.

It localises to the secreted. It carries out the reaction a 1,2-diacyl-sn-glycero-3-phosphocholine + H2O = a 1-acyl-sn-glycero-3-phosphocholine + a fatty acid + H(+). Snake venom phospholipase A2 (PLA2) that inhibits the ADP- and collagen-induced human platelet aggregation. Exhibits strong hydrolytic activities and prefers the anionic micelles (dPPC with deoxycholate) to the zwitterionic micelles (dPPC with Triton X-100). PLA2 catalyzes the calcium-dependent hydrolysis of the 2-acyl groups in 3-sn-phosphoglycerides. The chain is Acidic phospholipase A2 Omo-E6 from Ovophis monticola (Chinese mountain pitviper).